Reading from the N-terminus, the 155-residue chain is Transcriptional repressor NrdR (155 aa).

Residues 3 to 34 fold into a zinc finger; the sequence is CPFCGNIDTQVKDSRPAEDHVSIRRRRFCPAC. The region spanning 49–139 is the ATP-cone domain; it reads LVVIKSTGKR…VYKNFQAADD (91 aa).

The protein belongs to the NrdR family. It depends on Zn(2+) as a cofactor.

Its function is as follows. Negatively regulates transcription of bacterial ribonucleotide reductase nrd genes and operons by binding to NrdR-boxes. This chain is Transcriptional repressor NrdR, found in Roseobacter denitrificans (strain ATCC 33942 / OCh 114) (Erythrobacter sp. (strain OCh 114)).